The sequence spans 588 residues: Thioredoxin domain-containing protein 3 (588 aa).

Positions 2–119 constitute a Thioredoxin domain; it reads ASKKREVQLQ…VINLIDEERK (118 aa). A disulfide bridge links C39 with C42. NDK stretches follow at residues 157–257, 315–455, and 456–588; these read IAII…DQPE, LEKT…STLG, and LIKP…PEEN. Positions 230 to 261 are disordered; it reads GSKHNPPSEETEPQTDTEPNERSEDQPEVEAQ.

It in the C-terminal section; belongs to the NDK family. In terms of assembly, monomer. Testis-specific. Expressed only in primary spermatocytes and round spermatids.

The protein resides in the cytoplasm. Its function is as follows. Probably required during the final stages of sperm tail maturation in the testis and/or epididymis, where extensive disulfide bonding of fibrous sheath (FS) proteins occurs. In vitro, it has neither nucleoside diphosphate kinase (NDPK) activity nor reducing activity on disulfide bonds. Exhibits a 3'-5' exonuclease activity with a preference for single-stranded DNA, suggesting roles in DNA proofreading and repair. The chain is Thioredoxin domain-containing protein 3 from Homo sapiens (Human).